We begin with the raw amino-acid sequence, 609 residues long: Glutamine--fructose-6-phosphate aminotransferase [isomerizing] (609 aa).

Catalysis depends on cysteine 2, which acts as the Nucleophile; for GATase activity. A Glutamine amidotransferase type-2 domain is found at 2–218 (CGIVGAVAQR…EGDIAEVTRR (217 aa)). SIS domains lie at 286–426 (AAKL…LKGV) and 458–599 (LAED…VDQP). The For Fru-6P isomerization activity role is filled by lysine 604.

Homodimer.

The protein resides in the cytoplasm. The catalysed reaction is D-fructose 6-phosphate + L-glutamine = D-glucosamine 6-phosphate + L-glutamate. In terms of biological role, catalyzes the first step in hexosamine metabolism, converting fructose-6P into glucosamine-6P using glutamine as a nitrogen source. This Photorhabdus laumondii subsp. laumondii (strain DSM 15139 / CIP 105565 / TT01) (Photorhabdus luminescens subsp. laumondii) protein is Glutamine--fructose-6-phosphate aminotransferase [isomerizing].